We begin with the raw amino-acid sequence, 92 residues long: Acylphosphatase (92 aa).

In terms of domain architecture, Acylphosphatase-like spans 5-92 (YIVAYVYGVV…TPFETFSIRY (88 aa)). Active-site residues include Arg-20 and Asn-38.

Belongs to the acylphosphatase family.

The enzyme catalyses an acyl phosphate + H2O = a carboxylate + phosphate + H(+). The protein is Acylphosphatase (acyP) of Yersinia pseudotuberculosis serotype O:1b (strain IP 31758).